Consider the following 295-residue polypeptide: ATP synthase gamma chain (295 aa).

Belongs to the ATPase gamma chain family. In terms of assembly, F-type ATPases have 2 components, CF(1) - the catalytic core - and CF(0) - the membrane proton channel. CF(1) has five subunits: alpha(3), beta(3), gamma(1), delta(1), epsilon(1). CF(0) has three main subunits: a, b and c.

It is found in the cell membrane. In terms of biological role, produces ATP from ADP in the presence of a proton gradient across the membrane. The gamma chain is believed to be important in regulating ATPase activity and the flow of protons through the CF(0) complex. This Acetivibrio thermocellus (strain ATCC 27405 / DSM 1237 / JCM 9322 / NBRC 103400 / NCIMB 10682 / NRRL B-4536 / VPI 7372) (Clostridium thermocellum) protein is ATP synthase gamma chain.